The chain runs to 348 residues: GMP reductase 2 (348 aa).

NADP(+)-binding positions include serine 26–arginine 27, lysine 78, aspartate 129–alanine 131, and isoleucine 180–glycine 181. Positions 181, 183, and 186 each coordinate K(+). Cysteine 186 functions as the Thioimidate intermediate in the catalytic mechanism. Residue threonine 188 is the Proton donor/acceptor of the active site. Arginine 189 contacts K(+). GMP is bound by residues aspartate 219 to glycine 221, glycine 242 to glycine 243, glycine 268 to serine 270, and arginine 286 to glycine 290. NADP(+) is bound by residues methionine 269 and tyrosine 285–arginine 286. Lysine 291 carries the N6-acetyllysine modification. Residue serine 314–threonine 317 coordinates NADP(+).

Belongs to the IMPDH/GMPR family. GuaC type 1 subfamily. In terms of assembly, homotetramer. In terms of tissue distribution, highly expressed in heart, skeletal muscle, kidney, brain, liver, prostate, spleen, placenta, testis and ovary. Low expression in colon, thymus and peripheral blood leukocytes.

It carries out the reaction IMP + NH4(+) + NADP(+) = GMP + NADPH + 2 H(+). Catalyzes the irreversible NADPH-dependent deamination of GMP to IMP. It functions in the conversion of nucleobase, nucleoside and nucleotide derivatives of G to A nucleotides, and in maintaining the intracellular balance of A and G nucleotides. Plays a role in modulating cellular differentiation. In Homo sapiens (Human), this protein is GMP reductase 2.